A 109-amino-acid polypeptide reads, in one-letter code: Nucleoid-associated protein VS_0917 (109 aa).

Disordered stretches follow at residues 1–22 and 88–109; these read MFGKGGMGNMMKQAQQMQERMQ and QKEKMAGVTGGMQLPPGMKMPF. Over residues 9-18 the composition is skewed to low complexity; that stretch reads NMMKQAQQMQ.

Belongs to the YbaB/EbfC family. In terms of assembly, homodimer.

It is found in the cytoplasm. Its subcellular location is the nucleoid. Its function is as follows. Binds to DNA and alters its conformation. May be involved in regulation of gene expression, nucleoid organization and DNA protection. The polypeptide is Nucleoid-associated protein VS_0917 (Vibrio atlanticus (strain LGP32) (Vibrio splendidus (strain Mel32))).